Consider the following 161-residue polypeptide: Phosphopantetheine adenylyltransferase (161 aa).

Ser-11 provides a ligand contact to substrate. Residues 11–12 and His-19 contribute to the ATP site; that span reads SF. Residues Lys-43, Leu-75, and Arg-89 each coordinate substrate. ATP-binding positions include 90–92, Glu-100, and 125–131; these read GLR and YSYLSSS.

This sequence belongs to the bacterial CoaD family. Homohexamer. The cofactor is Mg(2+).

The protein resides in the cytoplasm. The catalysed reaction is (R)-4'-phosphopantetheine + ATP + H(+) = 3'-dephospho-CoA + diphosphate. Its pathway is cofactor biosynthesis; coenzyme A biosynthesis; CoA from (R)-pantothenate: step 4/5. Functionally, reversibly transfers an adenylyl group from ATP to 4'-phosphopantetheine, yielding dephospho-CoA (dPCoA) and pyrophosphate. The chain is Phosphopantetheine adenylyltransferase from Geobacter sp. (strain M21).